A 249-amino-acid polypeptide reads, in one-letter code: tRNA pseudouridine synthase A (249 aa).

The active-site Nucleophile is D54. Substrate is bound at residue Y112.

This sequence belongs to the tRNA pseudouridine synthase TruA family. Homodimer.

It catalyses the reaction uridine(38/39/40) in tRNA = pseudouridine(38/39/40) in tRNA. In terms of biological role, formation of pseudouridine at positions 38, 39 and 40 in the anticodon stem and loop of transfer RNAs. In Latilactobacillus sakei subsp. sakei (strain 23K) (Lactobacillus sakei subsp. sakei), this protein is tRNA pseudouridine synthase A.